The sequence spans 925 residues: ETO1-like protein 2 (925 aa).

The BTB domain occupies 207–307; sequence SDISFCVGSE…ECEARLAASV (101 aa). The TPR 1 repeat unit spans residues 409 to 442; it reads ALSLHQMGCVLFERKDYKAAQFHFRLASSLGHVY. Residues 509 to 533 adopt a coiled-coil conformation; that stretch reads KYRAVMKFEQKQIKEAFQEIDRLIQ. TPR repeat units follow at residues 538-571, 664-697, 738-771, 773-803, 834-867, and 869-900; these read PECL…EPNY, AERL…QRSF, GQAL…KHIR, RQGL…SCSK, TYPY…RPEL, and TLHL…DPNH.

The protein belongs to the ETO1 family. Interacts with the C-terminal domain of ACS5. In terms of tissue distribution, constitutively expressed in green and etiolated seedlings.

Its pathway is protein modification; protein ubiquitination. Potential regulator of the ethylene pathway, which acts by regulating the stability of 1-aminocyclopropane-1-carboxylate synthase (ACS) enzymes. May act as a substrate-specific adapter that connects ACS enzymes, such as ACS5, to ubiquitin ligase complexes, leading to proteasomal degradation of ACS enzymes. This is ETO1-like protein 2 (EOL2) from Arabidopsis thaliana (Mouse-ear cress).